A 366-amino-acid chain; its full sequence is Tubulin-like protein CetZ (366 aa).

GTP-binding positions include 10-14 (QCGTK), 103-105 (GTG), E136, N163, and N181.

The protein belongs to the CetZ family.

The protein localises to the cytoplasm. In terms of biological role, involved in cell shape control. This Pyrococcus furiosus (strain ATCC 43587 / DSM 3638 / JCM 8422 / Vc1) protein is Tubulin-like protein CetZ.